We begin with the raw amino-acid sequence, 326 residues long: Beta-ketoacyl-[acyl-carrier-protein] synthase III (326 aa).

Catalysis depends on residues Cys120 and His253. An ACP-binding region spans residues 254-258 (QANIR). The active site involves Asn283.

Belongs to the thiolase-like superfamily. FabH family. Homodimer.

It localises to the cytoplasm. It catalyses the reaction malonyl-[ACP] + acetyl-CoA + H(+) = 3-oxobutanoyl-[ACP] + CO2 + CoA. The protein operates within lipid metabolism; fatty acid biosynthesis. In terms of biological role, catalyzes the condensation reaction of fatty acid synthesis by the addition to an acyl acceptor of two carbons from malonyl-ACP. Catalyzes the first condensation reaction which initiates fatty acid synthesis and may therefore play a role in governing the total rate of fatty acid production. Possesses both acetoacetyl-ACP synthase and acetyl transacylase activities. Its substrate specificity determines the biosynthesis of branched-chain and/or straight-chain of fatty acids. The protein is Beta-ketoacyl-[acyl-carrier-protein] synthase III of Cupriavidus pinatubonensis (strain JMP 134 / LMG 1197) (Cupriavidus necator (strain JMP 134)).